The following is a 541-amino-acid chain: Nucleoporin NUP57 (541 aa).

Over residues 1–13 (MFGFSGSNNGFGN) the composition is skewed to low complexity. The interval 1 to 261 (MFGFSGSNNG…STGSNLQQQQ (261 aa)) is disordered. FG repeat units follow at residues 2-3 (FG) and 11-12 (FG). Residues 19 to 36 (TGFSFGQNNNNTNTQPSA) are compositionally biased toward polar residues. FXFG repeat units follow at residues 21-24 (FSFG) and 39-42 (FGFG). 2 FG repeats span residues 56 to 57 (FG) and 65 to 66 (FG). Positions 58–72 (ANQATNTFGSNQQSS) are enriched in polar residues. A GLFG 1 repeat occupies 76–79 (GLFG). Positions 83 to 102 (ALGSLGSSSTTASGTTATGT) are enriched in low complexity. GLFG repeat units lie at residues 103–106 (GLFG), 120–123 (GLFG), 132–135 (GLFG), and 147–150 (GLFG). Over residues 105-116 (FGQQTAQPQQST) the composition is skewed to polar residues. Over residues 125–146 (KPTTTTGGLFGNSAQNNSTTSG) the composition is skewed to polar residues. Residues 153–172 (VGSTGSLMGGNSTQNTSNMN) show a composition bias toward polar residues. 4 GLFG repeats span residues 175 to 178 (GLFG), 190 to 193 (GLFG), 204 to 207 (GLFG), and 220 to 223 (GLFG). Positions 228-257 (PQTNTAPGLGNTVSTQPSFAWSKPSTGSNL) are enriched in polar residues. Residues 398 to 425 (ILKAQSRNVEIEKRILKLGTQLATLKNR) adopt a coiled-coil conformation.

Belongs to the nucleoporin GLFG family. In terms of assembly, component of the nuclear pore complex (NPC). NPC constitutes the exclusive means of nucleocytoplasmic transport. NPCs allow the passive diffusion of ions and small molecules and the active, nuclear transport receptor-mediated bidirectional transport of macromolecules such as proteins, RNAs, ribonucleoparticles (RNPs), and ribosomal subunits across the nuclear envelope. Due to its 8-fold rotational symmetry, all subunits are present with 8 copies or multiples thereof. NUP57 is part of the NUP57 subcomplex (NIC96, NSP1, NUP49, NUP57) interacting with NUP49 and NSP1. Interacts through its FG repeats with karyopherins.

Its subcellular location is the nucleus. The protein resides in the nuclear pore complex. It localises to the nucleus membrane. Functions as a component of the nuclear pore complex (NPC). NPC components, collectively referred to as nucleoporins (NUPs), can play the role of both NPC structural components and of docking or interaction partners for transiently associated nuclear transport factors. Active directional transport is assured by both, a Phe-Gly (FG) repeat affinity gradient for these transport factors across the NPC and a transport cofactor concentration gradient across the nuclear envelope (GSP1 and GSP2 GTPases associated predominantly with GTP in the nucleus, with GDP in the cytoplasm). NUP57 plays an important role in several nuclear transport pathways including poly(A)+ RNA, tRNA, and pre-ribosome transport. This chain is Nucleoporin NUP57 (NUP57), found in Saccharomyces cerevisiae (strain ATCC 204508 / S288c) (Baker's yeast).